A 149-amino-acid polypeptide reads, in one-letter code: Transcriptional repressor NrdR (149 aa).

A zinc finger lies at 3-34 (CPFCSENDTKVIDSRLVADGHQVRRRRQCLAC). In terms of domain architecture, ATP-cone spans 49 to 139 (PRVIKSNGNR…VYRSFEDVRE (91 aa)).

The protein belongs to the NrdR family. Requires Zn(2+) as cofactor.

Its function is as follows. Negatively regulates transcription of bacterial ribonucleotide reductase nrd genes and operons by binding to NrdR-boxes. The protein is Transcriptional repressor NrdR of Vibrio cholerae serotype O1 (strain ATCC 39541 / Classical Ogawa 395 / O395).